A 1241-amino-acid polypeptide reads, in one-letter code: ATP-dependent helicase/nuclease subunit A (1241 aa).

One can recognise a UvrD-like helicase ATP-binding domain in the interval 12 to 485 (SQWTDDQWKA…IDLAKNFRSR (474 aa)). 33–40 (AAAGSGKT) contacts ATP. Residues 505-805 (GEIDYDADAE…RIMTIHKSKG (301 aa)) form the UvrD-like helicase C-terminal domain.

The protein belongs to the helicase family. AddA subfamily. In terms of assembly, heterodimer of AddA and AddB/RexB. Mg(2+) serves as cofactor.

It catalyses the reaction Couples ATP hydrolysis with the unwinding of duplex DNA by translocating in the 3'-5' direction.. The enzyme catalyses ATP + H2O = ADP + phosphate + H(+). The heterodimer acts as both an ATP-dependent DNA helicase and an ATP-dependent, dual-direction single-stranded exonuclease. Recognizes the chi site generating a DNA molecule suitable for the initiation of homologous recombination. The AddA nuclease domain is required for chi fragment generation; this subunit has the helicase and 3' -&gt; 5' nuclease activities. This Bacillus cereus (strain ZK / E33L) protein is ATP-dependent helicase/nuclease subunit A.